The chain runs to 254 residues: Ribosomal RNA small subunit methyltransferase J (254 aa).

Residues 101-102 (RD), 117-118 (ER), 153-154 (SS), and Asp171 contribute to the S-adenosyl-L-methionine site.

Belongs to the methyltransferase superfamily. RsmJ family.

Its subcellular location is the cytoplasm. The catalysed reaction is guanosine(1516) in 16S rRNA + S-adenosyl-L-methionine = N(2)-methylguanosine(1516) in 16S rRNA + S-adenosyl-L-homocysteine + H(+). Its function is as follows. Specifically methylates the guanosine in position 1516 of 16S rRNA. This Enterobacter sp. (strain 638) protein is Ribosomal RNA small subunit methyltransferase J.